We begin with the raw amino-acid sequence, 39 residues long: Photosystem II reaction center protein L (39 aa).

The chain crosses the membrane as a helical span at residues 18–38 (ILYWGLLLIFVLAVLFSNYFF).

Belongs to the PsbL family. As to quaternary structure, PSII is composed of 1 copy each of membrane proteins PsbA, PsbB, PsbC, PsbD, PsbE, PsbF, PsbH, PsbI, PsbJ, PsbK, PsbL, PsbM, PsbT, PsbX, PsbY, PsbZ, Psb30/Ycf12, at least 3 peripheral proteins of the oxygen-evolving complex and a large number of cofactors. It forms dimeric complexes.

The protein resides in the plastid membrane. Its function is as follows. One of the components of the core complex of photosystem II (PSII). PSII is a light-driven water:plastoquinone oxidoreductase that uses light energy to abstract electrons from H(2)O, generating O(2) and a proton gradient subsequently used for ATP formation. It consists of a core antenna complex that captures photons, and an electron transfer chain that converts photonic excitation into a charge separation. This subunit is found at the monomer-monomer interface and is required for correct PSII assembly and/or dimerization. In Cuscuta pentagona (Five-angled dodder), this protein is Photosystem II reaction center protein L.